Reading from the N-terminus, the 436-residue chain is Adenylosuccinate synthetase (436 aa).

Residues 13-19 and 41-43 each bind GTP; these read GDEGKGK and GHT. The active-site Proton acceptor is the aspartate 14. Mg(2+) is bound by residues aspartate 14 and glycine 41. IMP contacts are provided by residues 14–17, 39–42, threonine 130, arginine 144, glutamine 225, threonine 240, and arginine 304; these read DEGK and NAGH. Histidine 42 (proton donor) is an active-site residue. 300–306 is a substrate binding site; that stretch reads ATTGRSR. GTP is bound by residues arginine 306, 332 to 334, and 415 to 417; these read KLD and STG.

This sequence belongs to the adenylosuccinate synthetase family. In terms of assembly, homodimer. Mg(2+) is required as a cofactor.

It is found in the cytoplasm. The enzyme catalyses IMP + L-aspartate + GTP = N(6)-(1,2-dicarboxyethyl)-AMP + GDP + phosphate + 2 H(+). It functions in the pathway purine metabolism; AMP biosynthesis via de novo pathway; AMP from IMP: step 1/2. Plays an important role in the de novo pathway of purine nucleotide biosynthesis. Catalyzes the first committed step in the biosynthesis of AMP from IMP. This chain is Adenylosuccinate synthetase, found in Hamiltonella defensa subsp. Acyrthosiphon pisum (strain 5AT).